Here is a 95-residue protein sequence, read N- to C-terminus: Protein TusB (95 aa).

Belongs to the DsrH/TusB family. In terms of assembly, heterohexamer, formed by a dimer of trimers. The hexameric TusBCD complex contains 2 copies each of TusB, TusC and TusD. The TusBCD complex interacts with TusE.

It is found in the cytoplasm. Functionally, part of a sulfur-relay system required for 2-thiolation of 5-methylaminomethyl-2-thiouridine (mnm(5)s(2)U) at tRNA wobble positions. In Pectobacterium carotovorum subsp. carotovorum (strain PC1), this protein is Protein TusB.